A 360-amino-acid chain; its full sequence is SPRY domain-containing SOCS box protein 3 (360 aa).

The tract at residues 21–54 (DQDGRSPALHAEEEAWGYDSDGQHSNSDSDTDLL) is disordered. The 191-residue stretch at 84–274 (SLHPFRQIKS…MKVIRSCCCR (191 aa)) folds into the B30.2/SPRY domain. Residues 264–315 (SMKVIRSCCCRTSLQYLCCARLRQLLPGSVDSLEVLPLPPGLKQVLSNKLGW) form the SOCS box domain. The disordered stretch occupies residues 322-350 (NRSSQHKGDGSATTSCGSYSDSSCTPGHD). Positions 332-346 (SATTSCGSYSDSSCT) are enriched in polar residues.

The protein belongs to the SPSB family. In terms of assembly, substrate-recognition component of the ECS(SPSB3) complex, composed of spsb3, cul5, elob, elob and rnf7/rbx2.

The protein resides in the nucleus. Its pathway is protein modification; protein ubiquitination. Functionally, substrate-recognition component of a cullin-5-RING E3 ubiquitin-protein ligase complex (ECS complex, also named CRL5 complex), which mediates the ubiquitination and subsequent proteasomal degradation of target proteins. The chain is SPRY domain-containing SOCS box protein 3 (spsb3) from Xenopus laevis (African clawed frog).